The following is a 167-amino-acid chain: Endoribonuclease YbeY (167 aa).

Zn(2+)-binding residues include His131, His135, and His141.

The protein belongs to the endoribonuclease YbeY family. Requires Zn(2+) as cofactor.

It localises to the cytoplasm. In terms of biological role, single strand-specific metallo-endoribonuclease involved in late-stage 70S ribosome quality control and in maturation of the 3' terminus of the 16S rRNA. The polypeptide is Endoribonuclease YbeY (Rickettsia akari (strain Hartford)).